A 116-amino-acid polypeptide reads, in one-letter code: MDKKTSRLRRAIRARKKIQELGVNRLVVHRTPRHIYAQVINPEAQVVAAASTVEKAVKEQLKSTGNVDAAKAVGKFVAERAIEKGVTSVAFDRSGFKYHGRVAALADAAREAGLQF.

This sequence belongs to the universal ribosomal protein uL18 family. Part of the 50S ribosomal subunit; part of the 5S rRNA/L5/L18/L25 subcomplex. Contacts the 5S and 23S rRNAs.

This is one of the proteins that bind and probably mediate the attachment of the 5S RNA into the large ribosomal subunit, where it forms part of the central protuberance. The chain is Large ribosomal subunit protein uL18 from Shewanella putrefaciens (strain CN-32 / ATCC BAA-453).